Consider the following 487-residue polypeptide: NAD-dependent histone deacetylase HST3 (487 aa).

One can recognise a Deacetylase sirtuin-type domain in the interval 15–336 (PADTSIKLHE…FLTQEQLDSE (322 aa)). Residues 40–59 (GAGI…DGLY) and 129–132 (QNID) each bind NAD(+). Residue H167 is the Proton acceptor of the active site. C175, C178, C200, and C203 together coordinate Zn(2+). NAD(+) is bound by residues 261-263 (GTS), 291-293 (NKT), and C312. A compositionally biased stretch (basic and acidic residues) spans 397–406 (VESVSVKEEP). A disordered region spans residues 397–487 (VESVSVKEEP…ARKGITLDQH (91 aa)). The segment covering 415–425 (HKPKQATKLKR) has biased composition (basic residues). The span at 448 to 459 (DQLSSPASSING) shows a compositional bias: polar residues.

It belongs to the sirtuin family. Class I subfamily. Zn(2+) is required as a cofactor.

It is found in the cytoplasm. The protein localises to the nucleus. The enzyme catalyses N(6)-acetyl-L-lysyl-[protein] + NAD(+) + H2O = 2''-O-acetyl-ADP-D-ribose + nicotinamide + L-lysyl-[protein]. In terms of biological role, NAD-dependent histone deacetylase, which could function in telomeric silencing, cell cycle progression and chromosome stability. The sequence is that of NAD-dependent histone deacetylase HST3 (HST3) from Candida albicans (strain SC5314 / ATCC MYA-2876) (Yeast).